A 109-amino-acid polypeptide reads, in one-letter code: Insulin (109 aa).

Residues 1-24 (MAPWMHLLTVLALLALWGPNSVQA) form the signal peptide. Cystine bridges form between Cys-31-Cys-93, Cys-43-Cys-106, and Cys-92-Cys-97. Positions 56–84 (ELEDLQVEQAELGLEAGGLQPSALEMILQ) are cleaved as a propeptide — c peptide.

It belongs to the insulin family. In terms of assembly, heterodimer of a B chain and an A chain linked by two disulfide bonds.

The protein resides in the secreted. Its function is as follows. Insulin decreases blood glucose concentration. It increases cell permeability to monosaccharides, amino acids and fatty acids. It accelerates glycolysis, the pentose phosphate cycle, and glycogen synthesis in liver. This Octodon degus (Degu) protein is Insulin (INS).